A 65-amino-acid chain; its full sequence is Large ribosomal subunit protein bL35 (65 aa).

It belongs to the bacterial ribosomal protein bL35 family.

The sequence is that of Large ribosomal subunit protein bL35 from Parabacteroides distasonis (strain ATCC 8503 / DSM 20701 / CIP 104284 / JCM 5825 / NCTC 11152).